The sequence spans 203 residues: MKKMAIACALLSSVVASSVWADAASSLKSRLDKVSSFHATFTQKVTDGSGAAVQEGQGDLWVKRPNLFNWHMTQPDESILVSDGKTLWFYNPFVEQATATWLKDATGNTPFMLIARNQASDWQQYNIKQDGDNFVLTPKASNGNLKQFTINVGRDGTIHQFSAVEQDDQRSAYQLKSQQNGAVDPSKFTFTPPQGVTIDDQRK.

The first 21 residues, 1–21 (MKKMAIACALLSSVVASSVWA), serve as a signal peptide directing secretion. A disordered region spans residues 178–203 (QQNGAVDPSKFTFTPPQGVTIDDQRK).

Belongs to the LolA family. As to quaternary structure, monomer.

It is found in the periplasm. Its function is as follows. Participates in the translocation of lipoproteins from the inner membrane to the outer membrane. Only forms a complex with a lipoprotein if the residue after the N-terminal Cys is not an aspartate (The Asp acts as a targeting signal to indicate that the lipoprotein should stay in the inner membrane). This chain is Outer-membrane lipoprotein carrier protein, found in Salmonella agona (strain SL483).